Reading from the N-terminus, the 208-residue chain is 2-phospho-L-lactate guanylyltransferase (208 aa).

The protein belongs to the CofC family. Homodimer.

The enzyme catalyses (2S)-2-phospholactate + GTP + H(+) = (2S)-lactyl-2-diphospho-5'-guanosine + diphosphate. The protein operates within cofactor biosynthesis; coenzyme F420 biosynthesis. Functionally, guanylyltransferase that catalyzes the activation of (2S)-2-phospholactate (2-PL) as (2S)-lactyl-2-diphospho-5'-guanosine, via the condensation of 2-PL with GTP. It is involved in the biosynthesis of coenzyme F420, a hydride carrier cofactor. This is 2-phospho-L-lactate guanylyltransferase from Methanosarcina mazei (strain ATCC BAA-159 / DSM 3647 / Goe1 / Go1 / JCM 11833 / OCM 88) (Methanosarcina frisia).